The following is a 789-amino-acid chain: 1-phosphatidylinositol 4,5-bisphosphate phosphodiesterase delta-3 (789 aa).

Residues 63–172 (RAMLRGSRLR…WVRGLTKLRA (110 aa)) enclose the PH domain. A substrate binding region spans residues 73 to 101 (KIRSRTWHKERLYRLQEDGLSVWFQRRIP). Position 105 is a phosphoserine (Ser105). EF-hand domains lie at 182 to 217 (RLDH…VNVD), 218 to 253 (MNDM…LLKR), and 250 to 285 (LLKR…QGEE). Residues Asp195, Asn197, Asp199, Lys201, Glu206, Asp231, Ser233, Asn235, Arg237, and Glu242 each coordinate Ca(2+). One can recognise a PI-PLC X-box domain in the interval 337–482 (QDMNQPLAHY…LKGRVLVKGK (146 aa)). His352 is an active-site residue. Asn353, Glu382, and Asp384 together coordinate Ca(2+). Residue His397 is part of the active site. Glu431 lines the Ca(2+) pocket. The tract at residues 461 to 519 (SPNPEELPSPEQLKGRVLVKGKKLPAARSEDGRALSDREEEEEDDEEEEEEVEAAAQRR) is disordered. Substrate contacts are provided by Lys480 and Lys482. Over residues 488-497 (RSEDGRALSD) the composition is skewed to basic and acidic residues. Position 496 is a phosphoserine (Ser496). Residues 498 to 513 (REEEEEDDEEEEEEVE) are compositionally biased toward acidic residues. The region spanning 528-644 (LSALAVYCHA…GYVLKPACLR (117 aa)) is the PI-PLC Y-box domain. Ser557 contributes to the substrate binding site. Phosphoserine is present on Ser573. Arg584 serves as a coordination point for substrate. The C2 domain occupies 644 to 769 (RQPDSTFDPE…QGYRHIHLLS (126 aa)). Ile683, Asp685, Asn709, Asp738, Tyr739, and Asp740 together coordinate Ca(2+).

Ca(2+) is required as a cofactor. As to expression, present in corneal epithelial cells (at protein level).

The protein localises to the membrane. The protein resides in the cytoplasm. Its subcellular location is the cleavage furrow. It carries out the reaction a 1,2-diacyl-sn-glycero-3-phospho-(1D-myo-inositol-4,5-bisphosphate) + H2O = 1D-myo-inositol 1,4,5-trisphosphate + a 1,2-diacyl-sn-glycerol + H(+). Its activity is regulated as follows. Strongly activated by phosphatidic acid. Inhibited by phosphatidylethanolamine (PtdEtn), phosphatidylcholine (PtdCho), sphingomyelin and phosphatidylserine (PtdSer). In terms of biological role, hydrolyzes the phosphatidylinositol 4,5-bisphosphate (PIP2) to generate 2 second messenger molecules diacylglycerol (DAG) and inositol 1,4,5-trisphosphate (IP3). DAG mediates the activation of protein kinase C (PKC), while IP3 releases Ca(2+) from intracellular stores. Essential for trophoblast and placental development. May participate in cytokinesis by hydrolyzing PIP2 at the cleavage furrow. Regulates neurite outgrowth through the inhibition of RhoA/Rho kinase signaling. The chain is 1-phosphatidylinositol 4,5-bisphosphate phosphodiesterase delta-3 from Homo sapiens (Human).